Consider the following 329-residue polypeptide: Short-chain dehydrogenase/reductase tropG (329 aa).

Positions 57, 86, 113, 203, and 207 each coordinate NADP(+). Catalysis depends on Tyr-203, which acts as the Proton acceptor. Lys-207 functions as the Lowers pKa of active site Tyr in the catalytic mechanism.

It belongs to the short-chain dehydrogenases/reductases (SDR) family.

Its pathway is secondary metabolite biosynthesis. Short-chain dehydrogenase/reductase; part of the gene cluster that mediates the biosynthesis of the tropolone class of fungal maleic anhydrides. The pathway begins with the synthesis of 3-methylorcinaldehyde by the non-reducing polyketide synthase (PKS) tropA. 3-methylorcinaldehyde is the substrate for the FAD-dependent monooxygenase tropB to yield a dearomatized hydroxycyclohexadione. The 2-oxoglutarate-dependent dioxygenase tropC then performs the oxidative ring expansion to provide the first tropolone metabolite stipitaldehyde. Trop D converts stipitaldehyde into stipitacetal which is in turn converted to stipitalide by the short-chain dehydrogenase/reductase tropE. The next steps involve tropF, tropG, tropH, tropI and tropJ to form successive tropolone maleic anhydrides including stipitaldehydic, stipitatonic and stipitatic acids. The polypeptide is Short-chain dehydrogenase/reductase tropG (Talaromyces stipitatus (strain ATCC 10500 / CBS 375.48 / QM 6759 / NRRL 1006) (Penicillium stipitatum)).